We begin with the raw amino-acid sequence, 140 residues long: Large ribosomal subunit protein uL11 (140 aa).

This sequence belongs to the universal ribosomal protein uL11 family. In terms of assembly, part of the ribosomal stalk of the 50S ribosomal subunit. Interacts with L10 and the large rRNA to form the base of the stalk. L10 forms an elongated spine to which L12 dimers bind in a sequential fashion forming a multimeric L10(L12)X complex. One or more lysine residues are methylated.

In terms of biological role, forms part of the ribosomal stalk which helps the ribosome interact with GTP-bound translation factors. This chain is Large ribosomal subunit protein uL11, found in Desulforapulum autotrophicum (strain ATCC 43914 / DSM 3382 / VKM B-1955 / HRM2) (Desulfobacterium autotrophicum).